The following is a 485-amino-acid chain: Calcium/manganese antiporter SLC30A10 (485 aa).

The Cytoplasmic portion of the chain corresponds to 1-10 (MGRYSGKTCR). A helical membrane pass occupies residues 11–31 (LLFMLVLTVAFFVAELVSGYL). At 32–40 (GNSIALLSD) the chain is on the extracellular side. The helical transmembrane segment at 41–61 (SFNMLSDLISLCVGLSAGYIA) threads the bilayer. The Cytoplasmic segment spans residues 62-81 (RRPTRGFSATYGYARAEVVG). A helical membrane pass occupies residues 82–102 (ALSNAVFLTALCFTIFVEAVL). The Extracellular portion of the chain corresponds to 103 to 113 (RLARPERIDDP). A helical transmembrane segment spans residues 114–134 (ELVLIVGVLGLLVNVVGLLIF). The Cytoplasmic segment spans residues 135–244 (QDCAAWFACC…ALNIRGVLLH (110 aa)). The interval 167–196 (FGGPQGAEDPRRAADPTAPGSDSAVTLRGT) is disordered. Residues 245–265 (VMGDALGSVVVVITAIIFYVL) traverse the membrane as a helical segment. The Extracellular portion of the chain corresponds to 266–278 (PLKSEDPCNWQCY). A helical transmembrane segment spans residues 279–299 (IDPSLTVLMVIIILSSAFPLI). Residues 300–485 (KETAAILLQM…DQCYVNRTHF (186 aa)) lie on the Cytoplasmic side of the membrane. Residues 308–485 (QMVPKGVNME…DQCYVNRTHF (178 aa)) form a required for plasma membrane localization region.

It belongs to the cation diffusion facilitator (CDF) transporter (TC 2.A.4) family. SLC30A subfamily. In terms of assembly, forms homodimers. Forms heterodimers and high-molecular weight oligomers with SLC30A3, SLC30A2 and SLC30A4; heterodimerization is mediated by covalent-bound tyrosine residues, occurs probably in a tissue-specific manner and could mediate the intracellular zinc transport activity into early endosomes and recycling endosomes. In terms of tissue distribution, specifically expressed in fetal liver and fetal brain. Expressed in adult tissues with relative levels small intestine &gt; liver &gt; testes &gt; brain &gt; ovary &gt; colon &gt; cervix &gt; prostate &gt; placenta. Expressed in liver and neurons of the nervous system (at protein level).

The protein resides in the cell membrane. The protein localises to the golgi apparatus membrane. It is found in the recycling endosome membrane. It localises to the early endosome membrane. It carries out the reaction Mn(2+)(out) + Ca(2+)(in) = Mn(2+)(in) + Ca(2+)(out). The enzyme catalyses Zn(2+)(in) = Zn(2+)(out). Its function is as follows. Calcium:manganese antiporter of the plasma membrane mediating the efflux of intracellular manganese coupled to an active extracellular calcium exchange. Required for intracellular manganese homeostasis, an essential cation for the function of several enzymes, including some crucially important for the metabolism of neurotransmitters and other neuronal metabolic pathways. Manganese can also be cytotoxic and induce oxidative stress, mitochondrial dysfunction and apoptosis. Could also have an intracellular zinc ion transporter activity, directly regulating intracellular zinc ion homeostasis and more indirectly various signaling pathway and biological processes. This Homo sapiens (Human) protein is Calcium/manganese antiporter SLC30A10.